The primary structure comprises 155 residues: Ribosome-binding factor A (155 aa).

Belongs to the RbfA family. Monomer. Binds 30S ribosomal subunits, but not 50S ribosomal subunits or 70S ribosomes.

The protein resides in the cytoplasm. One of several proteins that assist in the late maturation steps of the functional core of the 30S ribosomal subunit. Associates with free 30S ribosomal subunits (but not with 30S subunits that are part of 70S ribosomes or polysomes). Required for efficient processing of 16S rRNA. May interact with the 5'-terminal helix region of 16S rRNA. This Methylocella silvestris (strain DSM 15510 / CIP 108128 / LMG 27833 / NCIMB 13906 / BL2) protein is Ribosome-binding factor A.